Reading from the N-terminus, the 499-residue chain is Xylulose kinase (499 aa).

81-82 (MH) contributes to the substrate binding site. Catalysis depends on aspartate 239, which acts as the Proton acceptor.

It belongs to the FGGY kinase family.

It carries out the reaction D-xylulose + ATP = D-xylulose 5-phosphate + ADP + H(+). Catalyzes the phosphorylation of D-xylulose to D-xylulose 5-phosphate. This chain is Xylulose kinase, found in Bacillus subtilis (strain 168).